Reading from the N-terminus, the 754-residue chain is MEYIYQYFWIITFISLPVPILIGVGLLLFPTATKSLRRMWVFPSVLLLSIIMLFSTYLAIQQVNNPSIYLSIWSWTINNDFSLEFGYLVDPLTSIMLILITTVGILVLIYSDNYMSHDQGYLRFFAYMSFFNTSMVGLVTSSNLIQIYFFWELVGMCSYLLIGFWFTRPTAANACQKAFVTNRVGDFGLLLGILGFYWITGSLEFRDLFEIFNNLVYNNEVNLLFATLCAFLLFAGAIAKSAQFPLHVWLPDAMEGPTPISALIHAATMVAAGIFLGARLLPLFIVMPYIMNLIALLGIITLLLGATLAFAQKDIKRGLAYSTMSQLGYMMLALGMGSYRAALFHLITHAYSKALLFLGSGSIIHSMESIVGYSPDKSQNLVLMGGLKKHVPITKTSFLLGTLSLCGIPPLGCFWSKDEILNDSWLYSPIFAIIAFSTAGLTAFYMFRIYLLTFEGHLNLYFQTYSGKKRSSVYSISLWGREEQKWIKTKFRLLPLLTMNNNKKTSFFFKKKYLINRNVRNLRGPIITIPNPNFGTKNSFSYPHESENTMLFSMLVLGLFTLFIGIIGIPFFNQEGIQLDILTKLLTPSINLLYQNKKNLMDWDWYEFITNATYSVSIASFGILIASFLYNPGYSSLQNFNLFNSFVKGISKKLKFFEDKIINVTYDWSYNRGYIDFFYATFLIQGIRILSELIHFFDRQVIDGITNGVGISSFFVGEGIKYVGVGRISSYLLVYISYVLIFLLIYSRGVLFFL.

A run of 16 helical transmembrane segments spans residues 8–28 (FWII…GLLL), 40–60 (WVFP…YLAI), 89–109 (VDPL…LVLI), 125–145 (FAYM…SNLI), 147–167 (IYFF…FWFT), 185–205 (GDFG…SLEF), 219–239 (NEVN…GAIA), 258–278 (TPIS…FLGA), 280–300 (LLPL…LGII), 327–347 (LGYM…FHLI), 354–374 (ALLF…VGYS), 396–416 (TSFL…CFWS), 425–445 (WLYS…TAFY), 552–572 (FSML…IPFF), 608–628 (FITN…IASF), and 733–753 (LVYI…VLFF).

It belongs to the complex I subunit 5 family. In terms of assembly, NDH is composed of at least 16 different subunits, 5 of which are encoded in the nucleus.

The protein resides in the plastid. It is found in the chloroplast thylakoid membrane. It carries out the reaction a plastoquinone + NADH + (n+1) H(+)(in) = a plastoquinol + NAD(+) + n H(+)(out). It catalyses the reaction a plastoquinone + NADPH + (n+1) H(+)(in) = a plastoquinol + NADP(+) + n H(+)(out). Its function is as follows. NDH shuttles electrons from NAD(P)H:plastoquinone, via FMN and iron-sulfur (Fe-S) centers, to quinones in the photosynthetic chain and possibly in a chloroplast respiratory chain. The immediate electron acceptor for the enzyme in this species is believed to be plastoquinone. Couples the redox reaction to proton translocation, and thus conserves the redox energy in a proton gradient. The protein is NAD(P)H-quinone oxidoreductase subunit 5, chloroplastic (ndhF) of Morus indica (Mulberry).